The chain runs to 396 residues: MSKSKFERKKPHINVGTIGHVDHGKTTLTAALTRILSEQYGGEFRAYDQIDNAPEERERGITIATSHVEYETEERHYAHVDCPGHADYVKNMITGAAQMDGAVLVVSAADGPMPQTREHILLARQVGVPFILVYLNKADMVDDPELLELVEMEVRELLDSYQFPGDDTPIVVGSALKALEGDTSEIGIPSILKLVEQMDAYIPEPQRAVDQPFLMPIEDVFSISGRGTVVTGRVERGIVKVGEEIEIVGMRETQKTICTGVEMFRKLLDEGRAGDNVGVLLRGTKREDVERGQVLAKPKSITPHTKFYAEVYVLSKDEGGRHTPFFTGYRPQFYFRTTDVTGAIDLPDGVEMVMPGDNIQMTVSLIAPIAMEEGLRFAVREGGRTVGAGVVSKVIE.

A tr-type G domain is found at 10–206; that stretch reads KPHINVGTIG…QMDAYIPEPQ (197 aa). The G1 stretch occupies residues 19 to 26; sequence GHVDHGKT. 19 to 26 is a GTP binding site; the sequence is GHVDHGKT. Threonine 26 serves as a coordination point for Mg(2+). A G2 region spans residues 60–64; the sequence is GITIA. Positions 81–84 are G3; that stretch reads DCPG. Residues 81-85 and 136-139 contribute to the GTP site; these read DCPGH and NKAD. The segment at 136–139 is G4; it reads NKAD. A G5 region spans residues 174 to 176; that stretch reads SAL.

This sequence belongs to the TRAFAC class translation factor GTPase superfamily. Classic translation factor GTPase family. EF-Tu/EF-1A subfamily. Monomer.

The protein resides in the cytoplasm. It catalyses the reaction GTP + H2O = GDP + phosphate + H(+). Its function is as follows. GTP hydrolase that promotes the GTP-dependent binding of aminoacyl-tRNA to the A-site of ribosomes during protein biosynthesis. This Nitrosococcus oceani (strain ATCC 19707 / BCRC 17464 / JCM 30415 / NCIMB 11848 / C-107) protein is Elongation factor Tu.